Consider the following 171-residue polypeptide: 3-hydroxydecanoyl-[acyl-carrier-protein] dehydratase (171 aa).

Residue H70 is part of the active site.

It belongs to the thioester dehydratase family. FabA subfamily. In terms of assembly, homodimer.

The protein resides in the cytoplasm. The enzyme catalyses a (3R)-hydroxyacyl-[ACP] = a (2E)-enoyl-[ACP] + H2O. It catalyses the reaction (3R)-hydroxydecanoyl-[ACP] = (2E)-decenoyl-[ACP] + H2O. It carries out the reaction (2E)-decenoyl-[ACP] = (3Z)-decenoyl-[ACP]. Its pathway is lipid metabolism; fatty acid biosynthesis. Its function is as follows. Necessary for the introduction of cis unsaturation into fatty acids. Catalyzes the dehydration of (3R)-3-hydroxydecanoyl-ACP to E-(2)-decenoyl-ACP and then its isomerization to Z-(3)-decenoyl-ACP. Can catalyze the dehydratase reaction for beta-hydroxyacyl-ACPs with saturated chain lengths up to 16:0, being most active on intermediate chain length. This chain is 3-hydroxydecanoyl-[acyl-carrier-protein] dehydratase, found in Shewanella putrefaciens (strain CN-32 / ATCC BAA-453).